The following is a 535-amino-acid chain: T-complex protein 1 subunit zeta 2 (535 aa).

This sequence belongs to the TCP-1 chaperonin family. As to quaternary structure, heterooligomeric complex of about 850 to 900 kDa that forms two stacked rings, 12 to 16 nm in diameter.

Its subcellular location is the cytoplasm. Functionally, molecular chaperone; assists the folding of proteins upon ATP hydrolysis. Known to play a role, in vitro, in the folding of actin and tubulin. The polypeptide is T-complex protein 1 subunit zeta 2 (Arabidopsis thaliana (Mouse-ear cress)).